We begin with the raw amino-acid sequence, 438 residues long: uncharacterized protein (438 aa).

The N-terminal stretch at 1-19 (MKKLLLAASIICLASAGLA) is a signal peptide.

This is an uncharacterized protein from Rickettsia conorii (strain ATCC VR-613 / Malish 7).